We begin with the raw amino-acid sequence, 307 residues long: Elongation factor Ts (307 aa).

Residues 80–83 (TDFV) are involved in Mg(2+) ion dislocation from EF-Tu.

Belongs to the EF-Ts family.

Its subcellular location is the cytoplasm. Its function is as follows. Associates with the EF-Tu.GDP complex and induces the exchange of GDP to GTP. It remains bound to the aminoacyl-tRNA.EF-Tu.GTP complex up to the GTP hydrolysis stage on the ribosome. The sequence is that of Elongation factor Ts from Xanthobacter autotrophicus (strain ATCC BAA-1158 / Py2).